We begin with the raw amino-acid sequence, 1008 residues long: Serine/threonine-protein kinase PRP4 homolog (1008 aa).

Residues 1–103 (MAAAEAPSLR…PAKRTKLDDL (103 aa)) form a disordered region. N-acetylalanine is present on alanine 2. Serine 8, serine 20, serine 23, and serine 32 each carry phosphoserine. 2 stretches are compositionally biased toward basic residues: residues 39–59 (KHSR…KHKH) and 67–81 (RKHK…HKRK). The segment covering 82–91 (EVADASDKEG) has biased composition (basic and acidic residues). Serine 87 and serine 93 each carry phosphoserine. Residue lysine 99 is modified to N6-acetyllysine; alternate. Residue lysine 99 forms a Glycyl lysine isopeptide (Lys-Gly) (interchain with G-Cter in SUMO2); alternate linkage. A Glycyl lysine isopeptide (Lys-Gly) (interchain with G-Cter in SUMO2) cross-link involves residue lysine 111. Lysine 117 participates in a covalent cross-link: Glycyl lysine isopeptide (Lys-Gly) (interchain with G-Cter in SUMO2); alternate. Lysine 117 is covalently cross-linked (Glycyl lysine isopeptide (Lys-Gly) (interchain with G-Cter in SUMO1); alternate). Serine 131 carries the post-translational modification Phosphoserine. Tyrosine 140 carries the post-translational modification Phosphotyrosine. 2 disordered regions span residues 140–536 (YESG…EDEE) and 560–584 (SNLS…SPDD). A phosphoserine mark is found at serine 142, serine 144, and serine 166. Low complexity predominate over residues 157-168 (GNRSSTRSSSTK). Residues lysine 170 and lysine 177 each participate in a glycyl lysine isopeptide (Lys-Gly) (interchain with G-Cter in SUMO2) cross-link. Basic residues-rich tracts occupy residues 179–202 (STKK…KKSK) and 214–230 (RSKS…SKRS). Phosphoserine occurs at positions 239, 241, 257, 277, 283, 292, and 294. Positions 247–270 (RSQEKVGKARSPVDDKAKVEDKSK) are enriched in basic and acidic residues. A compositionally biased stretch (basic residues) spans 302 to 315 (SKDRRSRSKERKSK). The span at 316–325 (RPEADKEKKP) shows a compositional bias: basic and acidic residues. Residues serine 328, serine 354, serine 356, serine 366, and serine 368 each carry the phosphoserine modification. Basic residues predominate over residues 342–367 (PSRRPGRSPKRRSLSPKQRDKSRRSR). Threonine 385 is modified (phosphothreonine). The residue at position 387 (serine 387) is a Phosphoserine. 2 stretches are compositionally biased toward basic and acidic residues: residues 395 to 408 (RSLE…ERRR) and 415 to 429 (RPRD…RSKD). Phosphoserine is present on residues serine 427, serine 431, and serine 437. Residues 438-498 (PARRRASRSP…RGGRRRRSRS (61 aa)) are compositionally biased toward basic residues. A phosphoserine mark is found at serine 519, serine 520, serine 521, serine 566, serine 570, serine 577, serine 579, and serine 581. Positions 519–536 (SSSDDNLEDFDVEEEDEE) are enriched in acidic residues. Over residues 563-582 (SVPSEPSSPQSSTRSRSPSP) the composition is skewed to low complexity. Glycyl lysine isopeptide (Lys-Gly) (interchain with G-Cter in SUMO2) cross-links involve residues lysine 594 and lysine 660. The region spanning 688 to 1004 (YNVYGYTGQG…INQALQHAFI (317 aa)) is the Protein kinase domain. ATP contacts are provided by residues 694–702 (TGQGVFSNV) and lysine 718. An N6-acetyllysine modification is found at lysine 718. Aspartate 816 acts as the Proton acceptor in catalysis. Tyrosine 850 bears the Phosphotyrosine mark. Serine 853 carries the post-translational modification Phosphoserine.

This sequence belongs to the protein kinase superfamily. CMGC Ser/Thr protein kinase family. In terms of assembly, interacts with CLK1 C-terminus. Associates with the U5 snRNP and NCOR1 deacetylase complexes. Identified in the spliceosome C complex. Post-translationally, phosphorylated by CLK1. Autophosphorylated; phosphorylation inhibits interaction with its targets, such as PRPF6 or SMARCA4.

Its subcellular location is the nucleus. The protein resides in the chromosome. It localises to the centromere. The protein localises to the kinetochore. It catalyses the reaction L-seryl-[protein] + ATP = O-phospho-L-seryl-[protein] + ADP + H(+). The enzyme catalyses L-threonyl-[protein] + ATP = O-phospho-L-threonyl-[protein] + ADP + H(+). Its function is as follows. Serine/threonine kinase involved in spliceosomal assembly as well as mitosis and signaling regulation. Connects chromatin mediated regulation of transcription and pre-mRNA splicing. During spliceosomal assembly, interacts with and phosphorylates PRPF6 and PRPF31, components of the U4/U6-U5 tri-small nuclear ribonucleoprotein (snRNP), to facilitate the formation of the spliceosome B complex. Plays a role in regulating transcription and the spindle assembly checkpoint (SAC). Associates with U5 snRNP and NCOR1 deacetylase complexes which may allow a coordination of pre-mRNA splicing with chromatin remodeling events involved in transcriptional regulation. Associates and probably phosphorylates SMARCA4 and NCOR1. Phosphorylates SRSF1. Associates with kinetochores during mitosis and is necessary for recruitment and maintenance of the checkpoint proteins such as MAD1L1 and MAD12L1 at the kinetochores. Phosphorylates and regulates the activity of the transcription factors such as ELK1 and KLF13. Phosphorylates nuclear YAP1 and WWTR1/TAZ which induces nuclear exclusion and regulates Hippo signaling pathway, involved in tissue growth control. This is Serine/threonine-protein kinase PRP4 homolog (PRP4K) from Bos taurus (Bovine).